The chain runs to 769 residues: Probable beta-glucosidase M (769 aa).

An N-terminal signal peptide occupies residues 1 to 22 (MHSNLGLAGLAGLLATASVCLS). Asn28, Asn75, and Asn262 each carry an N-linked (GlcNAc...) asparagine glycan. The active site involves Asp290. N-linked (GlcNAc...) asparagine glycosylation is found at Asn318, Asn325, Asn437, and Asn546.

Belongs to the glycosyl hydrolase 3 family.

Its subcellular location is the secreted. The enzyme catalyses Hydrolysis of terminal, non-reducing beta-D-glucosyl residues with release of beta-D-glucose.. It functions in the pathway glycan metabolism; cellulose degradation. Its function is as follows. Beta-glucosidases are one of a number of cellulolytic enzymes involved in the degradation of cellulosic biomass. Catalyzes the last step releasing glucose from the inhibitory cellobiose. This Neosartorya fischeri (strain ATCC 1020 / DSM 3700 / CBS 544.65 / FGSC A1164 / JCM 1740 / NRRL 181 / WB 181) (Aspergillus fischerianus) protein is Probable beta-glucosidase M (bglM).